Here is a 98-residue protein sequence, read N- to C-terminus: NADH-ubiquinone oxidoreductase chain 4L (98 aa).

3 helical membrane passes run 1–21 (MSPI…GMLV), 26–46 (LMAS…MIAL), and 61–81 (IILL…LVSI).

Belongs to the complex I subunit 4L family. Core subunit of respiratory chain NADH dehydrogenase (Complex I) which is composed of 45 different subunits.

Its subcellular location is the mitochondrion inner membrane. It carries out the reaction a ubiquinone + NADH + 5 H(+)(in) = a ubiquinol + NAD(+) + 4 H(+)(out). Functionally, core subunit of the mitochondrial membrane respiratory chain NADH dehydrogenase (Complex I) which catalyzes electron transfer from NADH through the respiratory chain, using ubiquinone as an electron acceptor. Part of the enzyme membrane arm which is embedded in the lipid bilayer and involved in proton translocation. In Chlorocebus sabaeus (Green monkey), this protein is NADH-ubiquinone oxidoreductase chain 4L (MT-ND4L).